The chain runs to 397 residues: Odorant receptor 22a (397 aa).

Residues 1–49 (MLSKFFPHIKEKPLSERVKSRDAFIYLDRVMWSFGWTEPENKRWILPYK) lie on the Cytoplasmic side of the membrane. Residues 50–70 (LWLAFVNIVMLILLPISISIE) form a helical membrane-spanning segment. The Extracellular portion of the chain corresponds to 71 to 86 (YLHRFKTFSAGEFLSS). A helical transmembrane segment spans residues 87 to 107 (LEIGVNMYGSSFKCAFTLIGF). The Cytoplasmic segment spans residues 108–136 (KKRQEAKVLLDQLDKRCLSDKERSTVHRY). The helical transmembrane segment at 137–157 (VAMGNFFDILYHIFYSTFVVM) threads the bilayer. The Extracellular segment spans residues 158 to 182 (NFPYFLLERRHAWRMYFPYIDSDEQ). A helical transmembrane segment spans residues 183–203 (FYISSIAECFLMTEAIYMDLC). The Cytoplasmic portion of the chain corresponds to 204-263 (TDVCPLISMLMARCHISLLKQRLRNLRSKPGRTEDEYLEELTECIRDHRLLLDYVDALRP). Residues 264–280 (VFSGTIFVQFLLIGTVL) form a helical membrane-spanning segment. The Extracellular segment spans residues 281–286 (GLSMIN). Residues 287 to 304 (LMFFSTFWTGVATCLFMF) traverse the membrane as a helical segment. The Cytoplasmic segment spans residues 305 to 356 (DVSMETFPFCYLCNMIIDDCQEMSNCLFQSDWTSADRRYKSTLVYFLHNLQQ). The chain crosses the membrane as a helical span at residues 357–377 (PITLTAGGVFPISMQTNLAMV). The Extracellular segment spans residues 378 to 397 (KLAFSVVTVIKQFNLAERFQ).

Belongs to the insect chemoreceptor superfamily. Heteromeric odorant receptor channel (TC 1.A.69) family. Or2a subfamily. As to quaternary structure, interacts with Orco, via conserved C-terminal cytoplasmic loops. Complexes exist early in the endomembrane system in olfactory sensory neurons (OSNs), coupling these complexes to the conserved ciliary trafficking pathway. Interacts with snmp1. In terms of tissue distribution, expressed with Orco in 17-20 sensory neurons on the medial-proximal edge of the antenna. Expressed in the ab3A neuron which responds to ethyl butyrate.

It localises to the cell membrane. Its function is as follows. Odorant receptor which mediates acceptance or avoidance behavior, depending on its substrates. The odorant receptor repertoire encodes a large collection of odor stimuli that vary widely in identity, intensity, and duration. Involved in the behavioral responses ethyl butyrate and to esters in more general. Complexes with Orco to form odorant-sensing units, providing sensitive and prolonged odorant signaling and calcium permeability. They are necessary and sufficient to promote functional reconstitution of odor-evoked signaling in sensory neurons that normally respond only to carbon dioxide. The protein is Odorant receptor 22a (Or22a) of Drosophila melanogaster (Fruit fly).